The chain runs to 216 residues: Octanoyltransferase (216 aa).

The 176-residue stretch at 32-207 (SDSQDELWIV…TFSQIMGYQQ (176 aa)) folds into the BPL/LPL catalytic domain. Residues 71 to 78 (RGGQVTYH), 138 to 140 (SLG), and 151 to 153 (GLA) contribute to the substrate site. The Acyl-thioester intermediate role is filled by Cys-169.

This sequence belongs to the LipB family.

Its subcellular location is the cytoplasm. It catalyses the reaction octanoyl-[ACP] + L-lysyl-[protein] = N(6)-octanoyl-L-lysyl-[protein] + holo-[ACP] + H(+). Its pathway is protein modification; protein lipoylation via endogenous pathway; protein N(6)-(lipoyl)lysine from octanoyl-[acyl-carrier-protein]: step 1/2. In terms of biological role, catalyzes the transfer of endogenously produced octanoic acid from octanoyl-acyl-carrier-protein onto the lipoyl domains of lipoate-dependent enzymes. Lipoyl-ACP can also act as a substrate although octanoyl-ACP is likely to be the physiological substrate. This is Octanoyltransferase from Shewanella frigidimarina (strain NCIMB 400).